The chain runs to 893 residues: Exocyst complex component 4 (893 aa).

Residues 1 to 27 form a disordered region; that stretch reads MNENGATPVAAARRHRPLPAERATSNS.

It belongs to the SEC8 family. As to quaternary structure, the exocyst complex is composed of sec-3/exoc1, sec-5/exoc2, sec-6/exoc3, sec-8/exoc4, sec-10/exoc5, sec-15/exoc6, exo-70/exoc7 and exo-84/exoc8. In terms of tissue distribution, pseudocoelom.

Its function is as follows. Component of the exocyst complex involved in the docking of exocytic vesicles with fusion sites on the plasma membrane. In Caenorhabditis elegans, this protein is Exocyst complex component 4 (sec-8).